A 106-amino-acid chain; its full sequence is Large ribosomal subunit protein uL24 (106 aa).

The protein belongs to the universal ribosomal protein uL24 family. In terms of assembly, part of the 50S ribosomal subunit.

One of two assembly initiator proteins, it binds directly to the 5'-end of the 23S rRNA, where it nucleates assembly of the 50S subunit. Its function is as follows. One of the proteins that surrounds the polypeptide exit tunnel on the outside of the subunit. This Azobacteroides pseudotrichonymphae genomovar. CFP2 protein is Large ribosomal subunit protein uL24.